We begin with the raw amino-acid sequence, 433 residues long: MSTKNEQLFAQARKHIPGGVNSPVRAFAGVGGTPIFMHRANGSKIYDTEDNAYIDYVGSWGPMILGHAHPKVIDAVKKAADDGLSFGTPTPFETTVADKICEIVPSVEMIRMTSSGTEATMSAIRLARGYTQRDKIVKFEGCYHGHSDSLLVKAGSGMLDIGEPTSKGVPADFAKHTITIPYNDPQAIKDCFEKWGEEIACVILEPIAGNMNMVIPSQEFHDTLRAECTANGAVLIFDEVMTGFRVGLGGAQAHFGIDPDLTCFGKIIGAGLPVGAFGGKKDIMSCIAPLGGVYQAGTLSGNPLAMRAGIAMFEDLTAEGFYDELSAKVDHLVDGFQAAADKHGINMRTNKLGGMFGMFFVKDSATTVPQNFDDVTECDMELFNTFFHGMLDRGIYLAPSAYEAGFMSIKHSNEDIEATIKAADEIFAEMAKA.

At Lys266 the chain carries N6-(pyridoxal phosphate)lysine.

It belongs to the class-III pyridoxal-phosphate-dependent aminotransferase family. HemL subfamily. Homodimer. Requires pyridoxal 5'-phosphate as cofactor.

Its subcellular location is the cytoplasm. It carries out the reaction (S)-4-amino-5-oxopentanoate = 5-aminolevulinate. Its pathway is porphyrin-containing compound metabolism; protoporphyrin-IX biosynthesis; 5-aminolevulinate from L-glutamyl-tRNA(Glu): step 2/2. In Psychrobacter cryohalolentis (strain ATCC BAA-1226 / DSM 17306 / VKM B-2378 / K5), this protein is Glutamate-1-semialdehyde 2,1-aminomutase.